The following is a 488-amino-acid chain: MEPFLRRRLAFLSFFWDKIWPAGGEPDHGTPGSLDPNTDPVPTLPAEPCSPFPQLFLALYDFTARCGGELSVRRGDRLCALEEGGGYIFARRLSGQPSAGLVPITHVAKASPETLSDQPWYFSGVSRTQAQQLLLSPPNEPGAFLIRPSESSLGGYSLSVRAQAKVCHYRVSMAADGSLYLQKGRLFPGLEELLTYYKANWKLIQNPLLQPCMPQKAPRQDVWERPHSEFALGRKLGEGYFGEVWEGLWLGSLPVAIKVIKSANMKLTDLAKEIQTLKGLRHERLIRLHAVCSGGEPVYIVTELMRKGNLQAFLGTPEGRALRLPPLLGFACQVAEGMSYLEEQRVVHRDLAARNVLVDDGLACKVADFGLARLLKDDIYSPSSSSKIPVKWTAPEAANYRVFSQKSDVWSFGVLLHEVFTYGQCPYEGMTNHETLQQIMRGYRLPRPAACPAEVYVLMLECWRSSPEERPSFATLREKLHAIHRCHP.

One can recognise an SH3 domain in the interval 51–112 (PFPQLFLALY…PITHVAKASP (62 aa)). The region spanning 120 to 212 (WYFSGVSRTQ…LIQNPLLQPC (93 aa)) is the SH2 domain. The Protein kinase domain occupies 230-488 (FALGRKLGEG…KLHAIHRCHP (259 aa)). ATP-binding positions include 236-244 (LGEGYFGEV) and K258. D350 functions as the Proton acceptor in the catalytic mechanism. Position 380 is a phosphotyrosine; by autocatalysis (Y380).

The protein belongs to the protein kinase superfamily. Tyr protein kinase family. SRC subfamily. Interacts (via the SH2 and SH3 domains) with DOK1. Interacts with KHDRBS1/SAM68 and VIM. Highly expressed in most breast cancers (at protein level).

It localises to the cytoplasm. It carries out the reaction L-tyrosyl-[protein] + ATP = O-phospho-L-tyrosyl-[protein] + ADP + H(+). Functionally, non-receptor tyrosine-protein kinase which phosphorylates DOK1 on tyrosine residues. Also phosphorylates KHDRBS1/SAM68 and VIM on tyrosine residues. Phosphorylation of KHDRBS1 is EGF-dependent. Phosphorylates OTUB1, promoting deubiquitination of RPTOR. This Homo sapiens (Human) protein is Tyrosine-protein kinase Srms (SRMS).